Reading from the N-terminus, the 384-residue chain is F-box only protein 5-B (384 aa).

Disordered regions lie at residues 1 to 20 and 79 to 106; these read MMCG…KSSA and DEEN…ETDS. Over residues 9–19 the composition is skewed to low complexity; it reads PSPKKLLSKSS. Residues 83–99 are compositionally biased toward polar residues; the sequence is SSLQDSGYSSILQNDSP. One can recognise an F-box domain in the interval 191 to 238; sequence AELFHRDFKHLLTKILRHLNAMDLINVIGVSTTWRKILQKDNWAYNTY. The ZBR-type zinc finger occupies 311-359; that stretch reads SLKACVDCGSPAKYDSYLHRAICTRESCKLDFCTLCSCKYHSSKSCLIS. Zn(2+)-binding residues include Cys-315, Cys-318, Cys-333, Cys-338, Cys-343, Cys-346, His-351, and Cys-356.

As to quaternary structure, part of a SCF (SKP1-cullin-F-box) protein ligase complex. Interacts with btrc. Interacts with skp1. Interacts with cdc20. Interacts with pin1; stabilizes fbxo5 by preventing its association with btrc in an isomerization-dependent pathway; this interaction is present during G2 phase and prevents fbxo5 degradation. Interacts with plk1. Post-translationally, proteolysed; proteolysis is induced by both cyclin B-cdk1 and cyclin A-cdk1/2 complex through probable phosphorylation. Proteolysis is inhibited by pin1 during G2.

The protein resides in the nucleus. Its subcellular location is the cytoplasm. It localises to the cytoskeleton. It is found in the spindle. The protein localises to the microtubule organizing center. The protein resides in the centrosome. Its pathway is protein modification; protein ubiquitination. Functionally, regulates progression through early mitosis by inhibiting the anaphase promoting complex/cyclosome (APC). Binds to the APC activators cdc20 to prevent APC activation. Can also bind directly to the APC to inhibit substrate-binding. Required to arrest unfertilized eggs at metaphase of meiosis II, by preventing their release from metaphase of meiosis II, through inhibition of APC-dependent cyclin B destruction leading to stabilization of cyclin B-cdk1 complex activity. The sequence is that of F-box only protein 5-B (fbxo5-b) from Xenopus laevis (African clawed frog).